We begin with the raw amino-acid sequence, 81 residues long: Protein RALF-like 6 (81 aa).

The N-terminal stretch at 1–29 (MAAHKKSHIRIFFVSVMIILSLFSGFGEG) is a signal peptide. 2 disulfides stabilise this stretch: Cys46–Cys54 and Cys66–Cys72.

This sequence belongs to the plant rapid alkalinization factor (RALF) family.

The protein resides in the secreted. Functionally, cell signaling peptide that may regulate plant stress, growth, and development. Mediates a rapid alkalinization of extracellular space by mediating a transient increase in the cytoplasmic Ca(2+) concentration leading to a calcium-dependent signaling events through a cell surface receptor and a concomitant activation of some intracellular mitogen-activated protein kinases. The chain is Protein RALF-like 6 (RALFL6) from Arabidopsis thaliana (Mouse-ear cress).